We begin with the raw amino-acid sequence, 109 residues long: uncharacterized protein (109 aa).

Transmembrane regions (helical) follow at residues 18–38 (TTLAWTRTAFALLVNGVLLTL) and 48–68 (AGLIPAGLAGAAASCCYVIAL).

Its subcellular location is the cell membrane. This is an uncharacterized protein from Mycobacterium tuberculosis (strain CDC 1551 / Oshkosh).